The following is a 1184-amino-acid chain: von Willebrand factor A domain-containing protein 3A (1184 aa).

The signal sequence occupies residues 1–24 (MKKYRKISIGCFAMATQTSHVFHG). The tract at residues 40 to 62 (GRDSKKPLKQKNMNGLGQNSDNG) is disordered. Polar residues predominate over residues 50-62 (KNMNGLGQNSDNG). A coiled-coil region spans residues 333 to 357 (TSRDMDELLAEIQKAQSLLSHVQAL). A VWFA 1 domain is found at 511 to 708 (RVVVLLDISA…SIMSEMEKAL (198 aa)). N-linked (GlcNAc...) asparagine glycosylation is present at N709. The tract at residues 729–780 (LGSSALPKEKPKTLQLRSQPKKLCPPRPTVPLGARMSIKDDPDREKSPPLKS) is disordered. Positions 765–776 (SIKDDPDREKSP) are enriched in basic and acidic residues. The region spanning 959-1131 (KVCILLDTSG…KIHSLLTKGF (173 aa)) is the VWFA 2 domain.

The protein localises to the secreted. The protein is von Willebrand factor A domain-containing protein 3A (VWA3A) of Homo sapiens (Human).